The sequence spans 386 residues: Putative gustatory receptor 92a (386 aa).

Residues 1-14 (MFEFLHQMSAPKLS) lie on the Cytoplasmic side of the membrane. Residues 15–35 (TSILRYIFRYAQFIGVIFFCL) traverse the membrane as a helical segment. Residues 36–79 (HTRKDDKTVFIRNWLKWLNVTHRIITFTRFFWVYIASISIKTNR) are Extracellular-facing. Residue Asn54 is glycosylated (N-linked (GlcNAc...) asparagine). Residues 80–100 (VLQVLHGMRLVLSIPNVAVIL) traverse the membrane as a helical segment. Over 101 to 141 (CYHIFRGPEIIDLINQFLRLFRQVSDLFKTKTPGFGGRREL) the chain is Cytoplasmic. A helical membrane pass occupies residues 142–162 (ILILLNLISFAHEQTYLWFTI). Residues 163–169 (RKGFSWR) are Extracellular-facing. The chain crosses the membrane as a helical span at residues 170 to 190 (FLIDWWCDFYLVSATNIFIHI). Topologically, residues 191–256 (NSIGYLSLGV…YHTSIMFHKL (66 aa)) are cytoplasmic. The chain crosses the membrane as a helical span at residues 257–277 (FVPLLFLALIYKVLLIALIGF). Topologically, residues 278–287 (NVAVEFYLNS) are extracellular. A helical membrane pass occupies residues 288 to 308 (FIFWILLGKHVLDLFLVTVSV). The Cytoplasmic portion of the chain corresponds to 309 to 356 (EGAVNQFLNIGMQFGNVGDLSKFQTTLDTLFLHLRLGHFRVSILGLFD). A helical transmembrane segment spans residues 357–377 (VTQMQYLQFLSALLSGLAFIA). Residues 378 to 386 (QYRMQVGNG) lie on the Extracellular side of the membrane.

The protein belongs to the insect chemoreceptor superfamily. Gustatory receptor (GR) family. Gr93a subfamily.

The protein localises to the cell membrane. Functionally, probable gustatory receptor which mediates acceptance or avoidance behavior, depending on its substrates. This chain is Putative gustatory receptor 92a (Gr92a), found in Drosophila melanogaster (Fruit fly).